The chain runs to 337 residues: Putative 4-hydroxythreonine-4-phosphate dehydrogenase (337 aa).

Residues H172, H216, and H271 each contribute to the a divalent metal cation site.

Belongs to the PdxA family. As to quaternary structure, homodimer. It depends on Zn(2+) as a cofactor. Requires Mg(2+) as cofactor. Co(2+) is required as a cofactor.

The protein localises to the cytoplasm. The catalysed reaction is 4-(phosphooxy)-L-threonine + NAD(+) = 3-amino-2-oxopropyl phosphate + CO2 + NADH. It functions in the pathway cofactor biosynthesis; pyridoxine 5'-phosphate biosynthesis; pyridoxine 5'-phosphate from D-erythrose 4-phosphate: step 4/5. Catalyzes the NAD(P)-dependent oxidation of 4-(phosphooxy)-L-threonine (HTP) into 2-amino-3-oxo-4-(phosphooxy)butyric acid which spontaneously decarboxylates to form 3-amino-2-oxopropyl phosphate (AHAP). The protein is Putative 4-hydroxythreonine-4-phosphate dehydrogenase of Pasteurella multocida (strain Pm70).